The primary structure comprises 464 residues: Purple acid phosphatase (464 aa).

Residues 1-30 (MGVVEGLLALALVLSACVMCNGGSSSPFIR) form the signal peptide. N-linked (GlcNAc...) asparagine glycosylation is found at asparagine 108 and asparagine 136. A Fe cation-binding site is contributed by aspartate 162. An N-linked (GlcNAc...) asparagine glycan is attached at asparagine 170. Fe cation-binding residues include aspartate 191 and tyrosine 194. Aspartate 191 is a Zn(2+) binding site. Asparagine 228 provides a ligand contact to Zn(2+). Asparagine 228 serves as a coordination point for substrate. Asparagine 301 carries an N-linked (GlcNAc...) asparagine glycan. Residue histidine 313 participates in Zn(2+) binding. Histidine 323 acts as the Proton donor in catalysis. Zn(2+) is bound at residue histidine 350. Residue 350–352 (HVH) participates in substrate binding. Histidine 352 is a binding site for Fe cation. Asparagine 398 and asparagine 423 each carry an N-linked (GlcNAc...) asparagine glycan.

This sequence belongs to the metallophosphoesterase superfamily. Purple acid phosphatase family. In terms of assembly, homodimer; disulfide-linked. Requires Fe cation as cofactor. It depends on Zn(2+) as a cofactor. The cofactor is Mn(2+). Cu(2+) serves as cofactor. Mg(2+) is required as a cofactor.

Its subcellular location is the secreted. The enzyme catalyses a phosphate monoester + H2O = an alcohol + phosphate. This is Purple acid phosphatase from Glycine max (Soybean).